Reading from the N-terminus, the 505-residue chain is Lysine--tRNA ligase (505 aa).

The span at 1-11 (MSDQQLDQPSL) shows a compositional bias: polar residues. The disordered stretch occupies residues 1–23 (MSDQQLDQPSLSHEERQHEENKL). The span at 12-23 (SHEERQHEENKL) shows a compositional bias: basic and acidic residues. 2 residues coordinate Mg(2+): E415 and E422.

Belongs to the class-II aminoacyl-tRNA synthetase family. As to quaternary structure, homodimer. It depends on Mg(2+) as a cofactor.

It localises to the cytoplasm. It catalyses the reaction tRNA(Lys) + L-lysine + ATP = L-lysyl-tRNA(Lys) + AMP + diphosphate. The sequence is that of Lysine--tRNA ligase from Ectopseudomonas mendocina (strain ymp) (Pseudomonas mendocina).